Consider the following 497-residue polypeptide: Bifunctional protein GlmU (497 aa).

Positions 1 to 252 (MSQPSARPSA…VWEVEGANDR (252 aa)) are pyrophosphorylase. UDP-N-acetyl-alpha-D-glucosamine-binding positions include 14–17 (LAAG), Lys28, Gln86, 91–92 (GT), 115–117 (YGD), Gly154, Glu169, Asn192, and Asn250. Asp117 provides a ligand contact to Mg(2+). Residue Asn250 coordinates Mg(2+). The linker stretch occupies residues 253 to 273 (RQLSDLGRRLNERVLRHWMKE). The N-acetyltransferase stretch occupies residues 274 to 497 (GVTVVDPSST…AGAEGSGAQG (224 aa)). 2 residues coordinate UDP-N-acetyl-alpha-D-glucosamine: Arg355 and Lys373. His385 serves as the catalytic Proton acceptor. UDP-N-acetyl-alpha-D-glucosamine is bound by residues Tyr388 and Asn399. Residues 408 to 409 (NY), Ser427, and Ala445 each bind acetyl-CoA. Residues 473-497 (PAKRPGTSSAEAARAAGAEGSGAQG) form a disordered region. Residues 480–490 (SSAEAARAAGA) show a composition bias toward low complexity.

In the N-terminal section; belongs to the N-acetylglucosamine-1-phosphate uridyltransferase family. This sequence in the C-terminal section; belongs to the transferase hexapeptide repeat family. Homotrimer. Requires Mg(2+) as cofactor.

The protein localises to the cytoplasm. It catalyses the reaction alpha-D-glucosamine 1-phosphate + acetyl-CoA = N-acetyl-alpha-D-glucosamine 1-phosphate + CoA + H(+). The enzyme catalyses N-acetyl-alpha-D-glucosamine 1-phosphate + UTP + H(+) = UDP-N-acetyl-alpha-D-glucosamine + diphosphate. Its pathway is nucleotide-sugar biosynthesis; UDP-N-acetyl-alpha-D-glucosamine biosynthesis; N-acetyl-alpha-D-glucosamine 1-phosphate from alpha-D-glucosamine 6-phosphate (route II): step 2/2. The protein operates within nucleotide-sugar biosynthesis; UDP-N-acetyl-alpha-D-glucosamine biosynthesis; UDP-N-acetyl-alpha-D-glucosamine from N-acetyl-alpha-D-glucosamine 1-phosphate: step 1/1. It participates in bacterial outer membrane biogenesis; LPS lipid A biosynthesis. Catalyzes the last two sequential reactions in the de novo biosynthetic pathway for UDP-N-acetylglucosamine (UDP-GlcNAc). The C-terminal domain catalyzes the transfer of acetyl group from acetyl coenzyme A to glucosamine-1-phosphate (GlcN-1-P) to produce N-acetylglucosamine-1-phosphate (GlcNAc-1-P), which is converted into UDP-GlcNAc by the transfer of uridine 5-monophosphate (from uridine 5-triphosphate), a reaction catalyzed by the N-terminal domain. The polypeptide is Bifunctional protein GlmU (Micrococcus luteus (strain ATCC 4698 / DSM 20030 / JCM 1464 / CCM 169 / CCUG 5858 / IAM 1056 / NBRC 3333 / NCIMB 9278 / NCTC 2665 / VKM Ac-2230) (Micrococcus lysodeikticus)).